The chain runs to 384 residues: Autophagy-related protein 30 (384 aa).

Residues 1–63 (MFSRKQVQKR…ASPGQLRPRT (63 aa)) form a disordered region. The span at 13 to 27 (ELSSLHCSNSSNSLN) shows a compositional bias: low complexity. Over residues 45-63 (RGNNRSDNVASPGQLRPRT) the composition is skewed to polar residues. At Ser112 the chain carries Phosphoserine. Residues 266-291 (VKHDKPSSPLPNYHNTLKQAPSSNSQ) form a disordered region. The segment covering 278-291 (YHNTLKQAPSSNSQ) has biased composition (polar residues).

In terms of assembly, interacts with ATG11, ATG17, ATG37, PEX3 and PEX14. In terms of processing, phosphorylation at Ser-112 is required for micro- and macropexophagy.

It is found in the vacuole lumen. Its subcellular location is the preautophagosomal structure. The protein resides in the peroxisome membrane. Functionally, acts as the peroxisome receptor for pexophagy. Required for both micropexophagy and macropexophagy, but not for the cytoplasm to vacuole transport (Cvt) or autophagy pathways. Required for functional micropexophagic apparatus (MIPA) and relocation of ATG11 to the peroxisome-sequestering arms of the vacuole. This Komagataella phaffii (strain GS115 / ATCC 20864) (Yeast) protein is Autophagy-related protein 30 (ATG30).